Consider the following 156-residue polypeptide: 6,7-dimethyl-8-ribityllumazine synthase (156 aa).

5-amino-6-(D-ribitylamino)uracil is bound by residues Phe-23, 57–59 (SFE), and 81–83 (AVI). 86-87 (GT) contacts (2S)-2-hydroxy-3-oxobutyl phosphate. His-89 acts as the Proton donor in catalysis. Tyr-114 lines the 5-amino-6-(D-ribitylamino)uracil pocket. A (2S)-2-hydroxy-3-oxobutyl phosphate-binding site is contributed by Arg-128.

The protein belongs to the DMRL synthase family. Forms an icosahedral capsid composed of 60 subunits, arranged as a dodecamer of pentamers.

The catalysed reaction is (2S)-2-hydroxy-3-oxobutyl phosphate + 5-amino-6-(D-ribitylamino)uracil = 6,7-dimethyl-8-(1-D-ribityl)lumazine + phosphate + 2 H2O + H(+). Its pathway is cofactor biosynthesis; riboflavin biosynthesis; riboflavin from 2-hydroxy-3-oxobutyl phosphate and 5-amino-6-(D-ribitylamino)uracil: step 1/2. In terms of biological role, catalyzes the formation of 6,7-dimethyl-8-ribityllumazine by condensation of 5-amino-6-(D-ribitylamino)uracil with 3,4-dihydroxy-2-butanone 4-phosphate. This is the penultimate step in the biosynthesis of riboflavin. The protein is 6,7-dimethyl-8-ribityllumazine synthase of Halorhodospira halophila (strain DSM 244 / SL1) (Ectothiorhodospira halophila (strain DSM 244 / SL1)).